Consider the following 394-residue polypeptide: Na(+)/H(+) antiporter NhaA (394 aa).

The next 11 helical transmembrane spans lie at 24 to 44 (AGLVLMACALAAIAVANSPLA), 58 to 78 (LSVQHWVNDGLMAVFFLLVGL), 96 to 116 (TLPGVAAVGGMAIPGIVYVML), 126 to 146 (GWAIPAATDIAFALGVMSLLG), 155 to 175 (IFLAALAIIDDLGAVIIIAIF), 180 to 200 (INVATLLGAVFVFGILRSLCA), 214 to 234 (AVLWVLLLVSGVHATLAGVLL), 267 to 287 (VAFAILPIFGFANAGVSFASI), 300 to 320 (VAAGLLIGKVVGIFGAVALMV), 336 to 356 (VLGVAFLCGIGFTMSLFIGLL), and 370 to 390 (GILAGSLLAGVLGYGILRIAG).

This sequence belongs to the NhaA Na(+)/H(+) (TC 2.A.33) antiporter family.

Its subcellular location is the cell inner membrane. The enzyme catalyses Na(+)(in) + 2 H(+)(out) = Na(+)(out) + 2 H(+)(in). Functionally, na(+)/H(+) antiporter that extrudes sodium in exchange for external protons. This chain is Na(+)/H(+) antiporter NhaA, found in Azorhizobium caulinodans (strain ATCC 43989 / DSM 5975 / JCM 20966 / LMG 6465 / NBRC 14845 / NCIMB 13405 / ORS 571).